A 624-amino-acid polypeptide reads, in one-letter code: MMNEALKKLEELLDKDQFEKIKAINNPYLHSFLAEWIQWLEPSKVYVCTDSEEDEEYVRWKALYYGEERMLEMVRHTVHYDNYYDQARDKQNTKLLVPKGTNLPFLNTMDREDGLREIREIMKGIMRGKELFIGFFVLGPKNSVFTIPAVQLTDSAYVMHSEFLLYRKGYEEFKRLGPTKNFLKFVHSAGELDERKTSKNLDKRRIYIDLVDETVYSANTQYGGNVIGLKKLAFRLTIQRAVREGWLSEHMFLMRVNGPNGRKTYFTGAYPSMCGKTSTAMIPWENIVGDDLVFIKNLDGVARAVNVEIGVFGIIEGINQKDDPIIWQVLHSPVEIIFSNVLVKDGKPYWNGMGIEIPDEGENHSGKWWRGKRDAEGKEIPPSHKNARFTVRLEAFPNLDREALENPCGVEVGGMIFGGRDPDTWPPVRESFNWDHGVITMGAALESETTAATLGKEGVRAFNPMSILDFLSVHIGDYLRNYLEFGRKLKKTPKIFAVNYFLRENGQWLNEKLDKAVWLKWMELRVHNDVGAIETPIGYIPRYEDLKVLFRQVLNKDYSREDYEKQFKIRVPELLAKIDRIWKIYEPIDNIPEELFQELEKERKRILEAREKYGDYISPFALEK.

Substrate-binding positions include Arg88 and 222-224 (YGG). Residues Lys231 and His250 each coordinate Mn(2+). Ser272 is a substrate binding site. 273–278 (MCGKTS) serves as a coordination point for GTP. Cys274 is a catalytic residue. Asp291 lines the Mn(2+) pocket. 386-388 (NAR) contributes to the substrate binding site. Residues Arg388 and Arg420 each coordinate GTP.

This sequence belongs to the phosphoenolpyruvate carboxykinase [GTP] family. Requires Mn(2+) as cofactor.

It is found in the cytoplasm. It catalyses the reaction oxaloacetate + GTP = phosphoenolpyruvate + GDP + CO2. The protein operates within carbohydrate biosynthesis; gluconeogenesis. Functionally, catalyzes the conversion of oxaloacetate (OAA) to phosphoenolpyruvate (PEP), the rate-limiting step in the metabolic pathway that produces glucose from lactate and other precursors derived from the citric acid cycle. The sequence is that of Phosphoenolpyruvate carboxykinase [GTP] from Pyrococcus furiosus (strain ATCC 43587 / DSM 3638 / JCM 8422 / Vc1).